We begin with the raw amino-acid sequence, 354 residues long: Magnesium-protoporphyrin IX monomethyl ester [oxidative] cyclase 2 (354 aa).

Belongs to the AcsF family. It depends on Fe cation as a cofactor.

The catalysed reaction is Mg-protoporphyrin IX 13-monomethyl ester + 3 NADPH + 3 O2 + 2 H(+) = 3,8-divinyl protochlorophyllide a + 3 NADP(+) + 5 H2O. Its pathway is porphyrin-containing compound metabolism; chlorophyll biosynthesis (light-independent). In terms of biological role, catalyzes the formation of the isocyclic ring in chlorophyll biosynthesis. Mediates the cyclase reaction, which results in the formation of divinylprotochlorophyllide (Pchlide) characteristic of all chlorophylls from magnesium-protoporphyrin IX 13-monomethyl ester (MgPMME). In Thermosynechococcus vestitus (strain NIES-2133 / IAM M-273 / BP-1), this protein is Magnesium-protoporphyrin IX monomethyl ester [oxidative] cyclase 2.